Reading from the N-terminus, the 245-residue chain is Ribonuclease 3 (245 aa).

Positions 19–148 (FKLFQEKIGI…FIGALYLDQG (130 aa)) constitute an RNase III domain. E61 contributes to the Mg(2+) binding site. D65 is a catalytic residue. Residues D134 and E137 each coordinate Mg(2+). E137 is a catalytic residue. Positions 174 to 243 (DYKSQLQELI…AAEALKKLKE (70 aa)) constitute a DRBM domain.

Belongs to the ribonuclease III family. As to quaternary structure, homodimer. Requires Mg(2+) as cofactor.

The protein resides in the cytoplasm. The enzyme catalyses Endonucleolytic cleavage to 5'-phosphomonoester.. Functionally, digests double-stranded RNA. Involved in the processing of primary rRNA transcript to yield the immediate precursors to the large and small rRNAs (23S and 16S). Processes some mRNAs, and tRNAs when they are encoded in the rRNA operon. Processes pre-crRNA and tracrRNA of type II CRISPR loci if present in the organism. This Bacillus cereus (strain 03BB102) protein is Ribonuclease 3.